Here is a 740-residue protein sequence, read N- to C-terminus: Ion-translocating oxidoreductase complex subunit C (740 aa).

2 consecutive 4Fe-4S ferredoxin-type domains span residues 369–397 (GEPQ…QQLY) and 407–436 (KATT…VQYF). Positions 377, 380, 383, 387, 416, 419, 422, and 426 each coordinate [4Fe-4S] cluster. Residues 602–716 (KLEQQQANAE…EPEEQVDPRK (115 aa)) form a disordered region.

This sequence belongs to the 4Fe4S bacterial-type ferredoxin family. RnfC subfamily. As to quaternary structure, the complex is composed of six subunits: RsxA, RsxB, RsxC, RsxD, RsxE and RsxG. Requires [4Fe-4S] cluster as cofactor.

It localises to the cell inner membrane. Functionally, part of a membrane-bound complex that couples electron transfer with translocation of ions across the membrane. Required to maintain the reduced state of SoxR. This Escherichia coli (strain SE11) protein is Ion-translocating oxidoreductase complex subunit C.